Here is a 230-residue protein sequence, read N- to C-terminus: MPPHLIDGQPHQHIDRPRRVRQPGEPLRIGIGGPVGSGKTALVAALCRTLRDEISVAVLTNDIYTTEDADFLRRHAVLPDERITAVQTGGCPHTAIRDDITANLDAIEDLIATNEPLDLILVESGGDNLTATFSSGLIDVQIFVIDVAGGDKVPRKGGPGVTFSDLLVINKTDLAPMVGADLTVMARDAAAVREGRPTAMISLTEDPAASEVLAWVRAHLTEAHQTDHAH.

33 to 40 (GPVGSGKT) is a binding site for GTP.

It belongs to the SIMIBI class G3E GTPase family. UreG subfamily. As to quaternary structure, homodimer. UreD, UreF and UreG form a complex that acts as a GTP-hydrolysis-dependent molecular chaperone, activating the urease apoprotein by helping to assemble the nickel containing metallocenter of UreC. The UreE protein probably delivers the nickel.

It localises to the cytoplasm. Facilitates the functional incorporation of the urease nickel metallocenter. This process requires GTP hydrolysis, probably effectuated by UreG. The polypeptide is Urease accessory protein UreG (Mycobacteroides abscessus (strain ATCC 19977 / DSM 44196 / CCUG 20993 / CIP 104536 / JCM 13569 / NCTC 13031 / TMC 1543 / L948) (Mycobacterium abscessus)).